Here is a 238-residue protein sequence, read N- to C-terminus: Probable transcriptional regulatory protein VIBHAR_07036 (238 aa).

Belongs to the TACO1 family.

It localises to the cytoplasm. The polypeptide is Probable transcriptional regulatory protein VIBHAR_07036 (Vibrio campbellii (strain ATCC BAA-1116)).